A 103-amino-acid chain; its full sequence is NADH-quinone oxidoreductase subunit K (103 aa).

The next 3 membrane-spanning stretches (helical) occupy residues 6–26 (IEYY…GFLL), 30–50 (LLVL…TLVA), and 66–86 (FFVI…VLAF).

This sequence belongs to the complex I subunit 4L family. As to quaternary structure, NDH-1 is composed of 14 different subunits. Subunits NuoA, H, J, K, L, M, N constitute the membrane sector of the complex.

The protein localises to the cell inner membrane. The enzyme catalyses a quinone + NADH + 5 H(+)(in) = a quinol + NAD(+) + 4 H(+)(out). NDH-1 shuttles electrons from NADH, via FMN and iron-sulfur (Fe-S) centers, to quinones in the respiratory chain. The immediate electron acceptor for the enzyme in this species is believed to be ubiquinone. Couples the redox reaction to proton translocation (for every two electrons transferred, four hydrogen ions are translocated across the cytoplasmic membrane), and thus conserves the redox energy in a proton gradient. The protein is NADH-quinone oxidoreductase subunit K of Sorangium cellulosum (strain So ce56) (Polyangium cellulosum (strain So ce56)).